Here is a 371-residue protein sequence, read N- to C-terminus: Aminomethyltransferase (371 aa).

This sequence belongs to the GcvT family. The glycine cleavage system is composed of four proteins: P, T, L and H.

It catalyses the reaction N(6)-[(R)-S(8)-aminomethyldihydrolipoyl]-L-lysyl-[protein] + (6S)-5,6,7,8-tetrahydrofolate = N(6)-[(R)-dihydrolipoyl]-L-lysyl-[protein] + (6R)-5,10-methylene-5,6,7,8-tetrahydrofolate + NH4(+). In terms of biological role, the glycine cleavage system catalyzes the degradation of glycine. The polypeptide is Aminomethyltransferase (Pectobacterium atrosepticum (strain SCRI 1043 / ATCC BAA-672) (Erwinia carotovora subsp. atroseptica)).